We begin with the raw amino-acid sequence, 951 residues long: MPGPLRLLCFFALGLLGSAGPSGAAPPLCAAPCSCDGDRRVDCSGKGLTAVPEGLSAFTQALDISMNNITQLPEDAFKSFPFLEELQLAGNDLSFIHPKALSGLKELKVLTLQNNQLRTVPSEAIHGLSALQSLRLDANHITSVPEDSFEGLVQLRHLWLDDNSLTEVPVRPLSNLPTLQALTLALNNISSIPDFAFTNLSSLVVLHLHNNKIKSLSQHCFDGLDNLETLDLNYNNLDEFPQAIKALPSLKELGFHSNSISVIPDGAFGGNPLLRTIHLYDNPLSFVGNSAFHNLSDLHSLVIRGASLVQWFPNLTGTVHLESLTLTGTKISSIPDDLCQNQKMLRTLDLSYNNIRDLPSFNGCRALEEISLQRNQISLIKENTFQGLTSLRILDLSRNLIREIHSGAFAKLGTITNLDVSFNELTSFPTEGLNGLNQLKLVGNFKLKDALAARDFANLRSLSVPYAYQCCAFWGCDSYANLNTEDNSPQEHSVTKEKGATDAANVTSTAENEEHSQIIIHCTPSTGAFKPCEYLLGSWMIRLTVWFIFLVALLFNLLVILTVFASCSSLPASKLFIGLISVSNLLMGIYTGILTFLDAVSWGRFAEFGIWWETGSGCKVAGSLAVFSSESAVFLLTLAAVERSVFAKDLMKHGKSSHLRQFQVAALLALLGAAVAGCFPLFHGGQYSASPLCLPFPTGETPSLGFTVTLVLLNSLAFLLMAIIYTKLYCNLEKEDLSENSQSSVIKHVAWLIFTNCIFFCPVAFFSFAPLITAISISPEIMKSVTLIFFPLPACLNPVLYVFFNPKFKEDWKLLKRRVTRKHGSVSVSISSQGGCGEQDFYYDCGMYSHLQGNLTVCDCCESFLLTKPVSCKHLIKSHSCPVLTAASCQRPEAYWSDCGTQSAHSDYADEEDSFVSDSSDQVQACGRACFYQSRGFPLVRYAYNLQRVRD.

Positions 1–24 are cleaved as a signal peptide; the sequence is MPGPLRLLCFFALGLLGSAGPSGA. The LRRNT domain occupies 25–57; the sequence is APPLCAAPCSCDGDRRVDCSGKGLTAVPEGLSA. The Extracellular portion of the chain corresponds to 25–544; that stretch reads APPLCAAPCS…LLGSWMIRLT (520 aa). 2 disulfides stabilise this stretch: Cys-29–Cys-35 and Cys-33–Cys-43. LRR repeat units lie at residues 58-79, 82-103, 106-127, 130-151, 154-177, 178-199, 202-223, 226-247, 249-270, and 273-294; these read FTQALDISMNNITQLPEDAFKS, FLEELQLAGNDLSFIHPKALSG, ELKVLTLQNNQLRTVPSEAIHG, ALQSLRLDANHITSVPEDSFEG, QLRHLWLDDNSLTEVPVRPLSNLP, TLQALTLALNNISSIPDFAFTN, SLVVLHLHNNKIKSLSQHCFDG, NLETLDLNYNNLDEFPQAIKAL, SLKELGFHSNSISVIPDGAFGG, and LLRTIHLYDNPLSFVGNSAFHN. An N-linked (GlcNAc...) asparagine glycan is attached at Asn-68. 2 N-linked (GlcNAc...) asparagine glycosylation sites follow: Asn-188 and Asn-199. N-linked (GlcNAc...) asparagine glycosylation is found at Asn-294 and Asn-314. 5 LRR repeats span residues 320-341, 344-365, 366-387, 390-411, and 414-435; these read HLESLTLTGTKISSIPDDLCQN, MLRTLDLSYNNIRDLPSFNGCR, ALEEISLQRNQISLIKENTFQG, SLRILDLSRNLIREIHSGAFAK, and TITNLDVSFNELTSFPTEGLNG. An intrachain disulfide couples Cys-339 to Cys-364. 2 cysteine pairs are disulfide-bonded: Cys-470/Cys-522 and Cys-471/Cys-476. The N-linked (GlcNAc...) asparagine glycan is linked to Asn-505. The helical transmembrane segment at 545-565 threads the bilayer; the sequence is VWFIFLVALLFNLLVILTVFA. The Cytoplasmic segment spans residues 566-575; that stretch reads SCSSLPASKL. Residues 576-596 traverse the membrane as a helical segment; it reads FIGLISVSNLLMGIYTGILTF. At 597–619 the chain is on the extracellular side; that stretch reads LDAVSWGRFAEFGIWWETGSGCK. Residues Cys-618 and Cys-693 are joined by a disulfide bond. Residues 620–640 form a helical membrane-spanning segment; sequence VAGSLAVFSSESAVFLLTLAA. Residues 641-661 are Cytoplasmic-facing; that stretch reads VERSVFAKDLMKHGKSSHLRQ. The helical transmembrane segment at 662–682 threads the bilayer; it reads FQVAALLALLGAAVAGCFPLF. At 683–703 the chain is on the extracellular side; that stretch reads HGGQYSASPLCLPFPTGETPS. Residues 704–724 traverse the membrane as a helical segment; that stretch reads LGFTVTLVLLNSLAFLLMAII. The Cytoplasmic segment spans residues 725 to 756; it reads YTKLYCNLEKEDLSENSQSSVIKHVAWLIFTN. Residues 757-777 traverse the membrane as a helical segment; sequence CIFFCPVAFFSFAPLITAISI. The Extracellular segment spans residues 778 to 783; the sequence is SPEIMK. A helical membrane pass occupies residues 784 to 804; sequence SVTLIFFPLPACLNPVLYVFF. The Cytoplasmic segment spans residues 805–951; that stretch reads NPKFKEDWKL…YAYNLQRVRD (147 aa). Phosphoserine is present on Ser-920.

This sequence belongs to the G-protein coupled receptor 1 family.

Its subcellular location is the cell membrane. In terms of biological role, receptor for R-spondins that potentiates the canonical Wnt signaling pathway and is involved in the formation of various organs. Upon binding to R-spondins (RSPO1, RSPO2, RSPO3 or RSPO4), associates with phosphorylated LRP6 and frizzled receptors that are activated by extracellular Wnt receptors, triggering the canonical Wnt signaling pathway to increase expression of target genes. In contrast to classical G-protein coupled receptors, does not activate heterotrimeric G-proteins to transduce the signal. Its function as activator of the Wnt signaling pathway is required for the development of various organs, including liver, kidney, intestine, bone, reproductive tract and eye. May also act as a receptor for norrin (NDP), such results however require additional confirmation in vivo. Required during spermatogenesis to activate the Wnt signaling pathway in peritubular myoid cells. Required for the maintenance of intestinal stem cells and Paneth cell differentiation in postnatal intestinal crypts. Acts as a regulator of bone formation and remodeling. Involved in kidney development; required for maintaining the ureteric bud in an undifferentiated state. Involved in the development of the anterior segment of the eye. Required during erythropoiesis. Also acts as a negative regulator of innate immunity by inhibiting TLR2/TLR4 associated pattern-recognition and pro-inflammatory cytokine production. Plays an important role in regulating the circadian rhythms of plasma lipids, partially through regulating the rhythmic expression of MTTP. Required for proper development of GnRH neurons (gonadotropin-releasing hormone expressing neurons) that control the release of reproductive hormones from the pituitary gland. In Rattus norvegicus (Rat), this protein is Leucine-rich repeat-containing G-protein coupled receptor 4 (Lgr4).